We begin with the raw amino-acid sequence, 465 residues long: Cysteine--tRNA ligase (465 aa).

Cys30 lines the Zn(2+) pocket. A 'HIGH' region motif is present at residues Ile32–His42. 3 residues coordinate Zn(2+): Cys214, His239, and Glu243. The short motif at Lys271–Ser275 is the 'KMSKS' region element. Lys274 contacts ATP.

Belongs to the class-I aminoacyl-tRNA synthetase family. Monomer. Zn(2+) serves as cofactor.

The protein localises to the cytoplasm. It catalyses the reaction tRNA(Cys) + L-cysteine + ATP = L-cysteinyl-tRNA(Cys) + AMP + diphosphate. This Burkholderia mallei (strain NCTC 10229) protein is Cysteine--tRNA ligase.